A 242-amino-acid polypeptide reads, in one-letter code: Sensory transduction protein LytT (242 aa).

A Response regulatory domain is found at 2–116; sequence HVLIVDDEPL…KITQVIEKAS (115 aa). The region spanning 137–241 is the HTH LytTR-type domain; the sequence is IPIQGEDRIY…VKEFKEKLGL (105 aa).

Phosphorylated by LytS.

It localises to the cytoplasm. In terms of biological role, member of the two-component regulatory system LytS/LytT that probably regulates genes involved in cell wall metabolism. The sequence is that of Sensory transduction protein LytT (lytT) from Enterococcus faecalis (strain ATCC 700802 / V583).